The sequence spans 388 residues: Formate-dependent phosphoribosylglycinamide formyltransferase (388 aa).

N(1)-(5-phospho-beta-D-ribosyl)glycinamide contacts are provided by residues 11–12 (EL) and glutamate 71. Residues arginine 103, lysine 144, 149 to 154 (SSGKGQ), 184 to 187 (EEFI), and glutamate 192 contribute to the ATP site. In terms of domain architecture, ATP-grasp spans 108–300 (DLAAKELGLK…EFELHLRAVL (193 aa)). Mg(2+)-binding residues include glutamate 257 and glutamate 270. Residues aspartate 277, lysine 349, and 356–357 (RR) contribute to the N(1)-(5-phospho-beta-D-ribosyl)glycinamide site.

This sequence belongs to the PurK/PurT family. As to quaternary structure, homodimer.

It catalyses the reaction N(1)-(5-phospho-beta-D-ribosyl)glycinamide + formate + ATP = N(2)-formyl-N(1)-(5-phospho-beta-D-ribosyl)glycinamide + ADP + phosphate + H(+). The protein operates within purine metabolism; IMP biosynthesis via de novo pathway; N(2)-formyl-N(1)-(5-phospho-D-ribosyl)glycinamide from N(1)-(5-phospho-D-ribosyl)glycinamide (formate route): step 1/1. Functionally, involved in the de novo purine biosynthesis. Catalyzes the transfer of formate to 5-phospho-ribosyl-glycinamide (GAR), producing 5-phospho-ribosyl-N-formylglycinamide (FGAR). Formate is provided by PurU via hydrolysis of 10-formyl-tetrahydrofolate. This chain is Formate-dependent phosphoribosylglycinamide formyltransferase, found in Bacteroides thetaiotaomicron (strain ATCC 29148 / DSM 2079 / JCM 5827 / CCUG 10774 / NCTC 10582 / VPI-5482 / E50).